Consider the following 128-residue polypeptide: MSEIPAELRYASSHEWAKVEDGVATVGISDHAQDAMGDLVYVELPEVGQVVAAGDETGVVESVKAASDIYSPVSGEIVEINEALEDEPELVNNVPYEGGWLFKVQLTDEGELDSLLTADQYQAQIDSE.

Positions Val23–Gln105 constitute a Lipoyl-binding domain. Lys64 is subject to N6-lipoyllysine.

It belongs to the GcvH family. As to quaternary structure, the glycine cleavage system is composed of four proteins: P, T, L and H. It depends on (R)-lipoate as a cofactor.

In terms of biological role, the glycine cleavage system catalyzes the degradation of glycine. The H protein shuttles the methylamine group of glycine from the P protein to the T protein. This Alcanivorax borkumensis (strain ATCC 700651 / DSM 11573 / NCIMB 13689 / SK2) protein is Glycine cleavage system H protein.